Reading from the N-terminus, the 24-residue chain is Snake venom metalloproteinase Batx-1 (24 aa).

The 24-residue stretch at 1-24 folds into the Peptidase M12B domain; the sequence is YIELAVVADHGIFTKYNSNLNTIR. Glu3 provides a ligand contact to Ca(2+).

The protein belongs to the venom metalloproteinase (M12B) family. P-I subfamily. In terms of assembly, monomer. Zn(2+) serves as cofactor. In terms of processing, the N-terminus is blocked. Contains 3 disulfide bonds. In terms of tissue distribution, expressed by the venom gland.

It is found in the secreted. Its activity is regulated as follows. Inhibited by EDTA, and o-phenanthroline, but not inhibited by PMSF, pepstatin A, and aprotinin. Zinc metalloproteinase that exhits a weak hemorrhagic activity. Degrades preferentially the Aalpha- (FGA) and Bbeta-chains (FGB) of fibrinogen, and partially degrades gamma-chain (FGG) at higher concentration. Induces a mild myotoxicity, but lacks coagulant activity on human plasma or bovin fibrinogen and defibrinating activity. This Bothrops atrox (Barba amarilla) protein is Snake venom metalloproteinase Batx-1.